Consider the following 1219-residue polypeptide: Protein jagged-1 (1219 aa).

The first 33 residues, Met-1–Gly-33, serve as a signal peptide directing secretion. The Extracellular portion of the chain corresponds to Gln-34–Asp-1067. Asn-143 is a glycosylation site (N-linked (GlcNAc...) asparagine). The 45-residue stretch at Val-185–Cys-229 folds into the DSL domain. Cystine bridges form between Cys-187-Cys-196 and Cys-200-Cys-212. Residues Phe-199 to Phe-207 form an important for interaction with NOTCH1 region. A glycan (N-linked (GlcNAc...) asparagine) is linked at Asn-217. Cystine bridges form between Cys-220-Cys-229, Cys-234-Cys-245, Cys-238-Cys-251, Cys-253-Cys-262, Cys-265-Cys-276, Cys-271-Cys-282, Cys-284-Cys-293, Cys-300-Cys-312, Cys-306-Cys-322, Cys-324-Cys-333, Cys-340-Cys-351, Cys-345-Cys-360, Cys-362-Cys-371, Cys-378-Cys-389, Cys-383-Cys-398, Cys-400-Cys-409, Cys-416-Cys-427, Cys-421-Cys-436, Cys-438-Cys-447, Cys-454-Cys-464, Cys-458-Cys-473, Cys-475-Cys-484, Cys-491-Cys-502, Cys-496-Cys-511, Cys-513-Cys-522, Cys-529-Cys-540, Cys-534-Cys-549, Cys-551-Cys-560, Cys-578-Cys-605, Cys-599-Cys-615, Cys-617-Cys-626, Cys-633-Cys-644, Cys-638-Cys-653, Cys-655-Cys-664, Cys-671-Cys-682, Cys-676-Cys-691, Cys-693-Cys-702, Cys-709-Cys-720, Cys-714-Cys-729, and Cys-731-Cys-740. In terms of domain architecture, EGF-like 1 spans Asn-230 to Asp-263. The region spanning Lys-264 to Asp-294 is the EGF-like 2; atypical domain. 2 consecutive EGF-like domains span residues Asp-296–Glu-334 and Ala-336–Ser-372. Residues Asn-374 to Gln-410 enclose the EGF-like 5; calcium-binding domain. Asn-382 is a glycosylation site (N-linked (GlcNAc...) asparagine). The region spanning Asp-412–Asp-448 is the EGF-like 6; calcium-binding domain. In terms of domain architecture, EGF-like 7; calcium-binding spans Asn-450 to Glu-485. The 37-residue stretch at Asp-487–Gln-523 folds into the EGF-like 8; calcium-binding domain. EGF-like domains are found at residues Asp-525–Ser-561 and Asp-586–His-627. Asn-559 is a glycosylation site (N-linked (GlcNAc...) asparagine). Residues Asn-629–Glu-665 form the EGF-like 11; calcium-binding domain. The EGF-like 12; calcium-binding domain maps to Asn-667–His-703. EGF-like domains follow at residues Arg-705–Asn-741 and Arg-744–Thr-780. Residue Asn-745 is glycosylated (N-linked (GlcNAc...) asparagine). Cystine bridges form between Cys-748-Cys-759, Cys-753-Cys-768, Cys-770-Cys-779, Cys-786-Cys-797, Cys-791-Cys-806, Cys-808-Cys-817, Cys-824-Cys-835, Cys-829-Cys-844, Cys-846-Cys-855, Cys-925-Cys-936, and Cys-948-Cys-958. Residues Asn-782 to Arg-818 enclose the EGF-like 15; calcium-binding domain. Residues Asn-820–His-856 form the EGF-like 16; calcium-binding domain. Asn-960, Asn-991, Asn-1045, and Asn-1064 each carry an N-linked (GlcNAc...) asparagine glycan. The helical transmembrane segment at Phe-1068 to Val-1093 threads the bilayer. At Arg-1094–Val-1219 the chain is on the cytoplasmic side. Positions Arg-1182–Val-1219 are disordered. The span at Arg-1189–Lys-1200 shows a compositional bias: polar residues.

In terms of assembly, interacts with NOTCH1. Interacts with NOTCH2 and NOTCH3. In terms of tissue distribution, widely expressed in a variety of tissues.

Its subcellular location is the membrane. The protein resides in the cell membrane. Ligand for multiple Notch receptors and involved in the mediation of Notch signaling. May be involved in cell-fate decisions during hematopoiesis. Enhances fibroblast growth factor-induced angiogenesis (in vitro). Seems to be involved in early and late stages of mammalian cardiovascular development. Inhibits myoblast differentiation. May regulate fibroblast growth factor-induced angiogenesis. The chain is Protein jagged-1 (Jag1) from Rattus norvegicus (Rat).